Reading from the N-terminus, the 125-residue chain is Protein ApaG (125 aa).

One can recognise an ApaG domain in the interval 3 to 125 (TAVTEGIEVT…FPLVVPGSLN (123 aa)).

The chain is Protein ApaG from Anaeromyxobacter dehalogenans (strain 2CP-1 / ATCC BAA-258).